We begin with the raw amino-acid sequence, 563 residues long: Dihydroxy-acid dehydratase (563 aa).

Cys-51 provides a ligand contact to [2Fe-2S] cluster. Asp-83 is a Mg(2+) binding site. [2Fe-2S] cluster is bound at residue Cys-124. The Mg(2+) site is built by Asp-125 and Lys-126. At Lys-126 the chain carries N6-carboxylysine. Cys-196 is a binding site for [2Fe-2S] cluster. Glu-448 provides a ligand contact to Mg(2+). Ser-474 serves as the catalytic Proton acceptor.

It belongs to the IlvD/Edd family. In terms of assembly, homodimer. [2Fe-2S] cluster is required as a cofactor. Requires Mg(2+) as cofactor.

It carries out the reaction (2R)-2,3-dihydroxy-3-methylbutanoate = 3-methyl-2-oxobutanoate + H2O. It catalyses the reaction (2R,3R)-2,3-dihydroxy-3-methylpentanoate = (S)-3-methyl-2-oxopentanoate + H2O. Its pathway is amino-acid biosynthesis; L-isoleucine biosynthesis; L-isoleucine from 2-oxobutanoate: step 3/4. It participates in amino-acid biosynthesis; L-valine biosynthesis; L-valine from pyruvate: step 3/4. Its function is as follows. Functions in the biosynthesis of branched-chain amino acids. Catalyzes the dehydration of (2R,3R)-2,3-dihydroxy-3-methylpentanoate (2,3-dihydroxy-3-methylvalerate) into 2-oxo-3-methylpentanoate (2-oxo-3-methylvalerate) and of (2R)-2,3-dihydroxy-3-methylbutanoate (2,3-dihydroxyisovalerate) into 2-oxo-3-methylbutanoate (2-oxoisovalerate), the penultimate precursor to L-isoleucine and L-valine, respectively. The polypeptide is Dihydroxy-acid dehydratase (Polynucleobacter necessarius subsp. necessarius (strain STIR1)).